The primary structure comprises 348 residues: Sensor protein VraS (348 aa).

2 helical membrane-spanning segments follow: residues 13–33 and 43–63; these read ILVYSMLTAFLFIDKVFVNII and IFGIPVFLFLNLVIILLCIIV. One can recognise a Histidine kinase domain in the interval 150 to 341; it reads RLARELHDSV…RIEVKAPLNR (192 aa).

The protein resides in the cell membrane. It carries out the reaction ATP + protein L-histidine = ADP + protein N-phospho-L-histidine.. In terms of biological role, member of the two-component regulatory system VraS/VraR involved in the control of the cell wall peptidoglycan biosynthesis. Probably activates VraR by phosphorylation. The chain is Sensor protein VraS (vraS) from Staphylococcus haemolyticus (strain JCSC1435).